The chain runs to 233 residues: Tapetum-specific methyltransferase 1 (233 aa).

Lys8 is a substrate binding site. S-adenosyl-L-methionine is bound by residues Val52, Glu74, 76–77 (GV), Ser82, Asp100, and Ala129. Asp150 provides a ligand contact to substrate. Asp150 contributes to the a divalent metal cation binding site. Asp152 provides a ligand contact to S-adenosyl-L-methionine. A divalent metal cation-binding residues include Asp176 and Asn177.

It belongs to the class I-like SAM-binding methyltransferase superfamily. Cation-dependent O-methyltransferase family. CCoAMT subfamily. The cofactor is a divalent metal cation. In terms of tissue distribution, expressed in inflorescences and flower buds. Not detected in roots, leaves or stems. Located exclusively in the tapetum of developing stamen.

It functions in the pathway aromatic compound metabolism; phenylpropanoid biosynthesis. Functionally, methyltransferase involved in phenylpropanoid polyamine conjugate biosynthesis. In vivo, methylates only one of the 5-hydroxyferuloyl moieties of N1,N5,N10-tri-(hydroxyferuloyl)-spermidine, while is able in vitro to convert all three 5-hydroxyferuloyl residues to the corresponding sinapoyl moieties and to methylate caffeoyl CoA and tricaffeoyl spermidine. This Arabidopsis thaliana (Mouse-ear cress) protein is Tapetum-specific methyltransferase 1 (TSM1).